Reading from the N-terminus, the 105-residue chain is Large ribosomal subunit protein uL24 (105 aa).

It belongs to the universal ribosomal protein uL24 family. Part of the 50S ribosomal subunit.

Its function is as follows. One of two assembly initiator proteins, it binds directly to the 5'-end of the 23S rRNA, where it nucleates assembly of the 50S subunit. Functionally, one of the proteins that surrounds the polypeptide exit tunnel on the outside of the subunit. In Tolumonas auensis (strain DSM 9187 / NBRC 110442 / TA 4), this protein is Large ribosomal subunit protein uL24.